The following is a 385-amino-acid chain: Protein pelota homolog (385 aa).

Lysine 162 participates in a covalent cross-link: Glycyl lysine isopeptide (Lys-Gly) (interchain with G-Cter in SUMO2). Residues serine 374, serine 380, serine 381, and serine 382 each carry the phosphoserine modification.

It belongs to the eukaryotic release factor 1 family. Pelota subfamily. Component of the Pelota-HBS1L complex, also named Dom34-Hbs1 complex, composed of PELO and HBS1L. Interacts with PINK1. Interacts with ABCE1. Interacts with CNOT4. Requires a divalent metal cation as cofactor. In terms of tissue distribution, ubiquitously expressed.

It localises to the cytoplasm. Its function is as follows. Component of the Pelota-HBS1L complex, a complex that recognizes stalled ribosomes and triggers the No-Go Decay (NGD) pathway. In the Pelota-HBS1L complex, PELO recognizes ribosomes stalled at the 3' end of an mRNA and engages stalled ribosomes by destabilizing mRNA in the mRNA channel. Following mRNA extraction from stalled ribosomes by the SKI complex, the Pelota-HBS1L complex promotes recruitment of ABCE1, which drives the disassembly of stalled ribosomes, followed by degradation of damaged mRNAs as part of the NGD pathway. As part of the PINK1-regulated signaling, upon mitochondrial damage is recruited to the ribosome/mRNA-ribonucleoprotein complex associated to mitochondrial outer membrane thereby enabling the recruitment of autophagy receptors and induction of mitophagy. The protein is Protein pelota homolog of Homo sapiens (Human).